A 1036-amino-acid polypeptide reads, in one-letter code: KAT8 regulatory NSL complex subunit 1 (1036 aa).

At Lys-104 the chain carries N6-acetyllysine. Disordered regions lie at residues 145-211 and 226-257; these read GQTA…CTLP and NSTA…SSSN. The span at 226 to 244 shows a compositional bias: polar residues; the sequence is NSTANKSSVNSMDQPALQG. The segment covering 245–256 has biased composition (low complexity); that stretch reads SSRLSPSTDSSS. Phosphoserine is present on Ser-249. Residue Lys-262 forms a Glycyl lysine isopeptide (Lys-Gly) (interchain with G-Cter in SUMO2) linkage. Residue Ser-268 is modified to Phosphoserine. The stretch at 285 to 312 forms a coiled coil; it reads TALLRRQADIEIRARRLQKRLQVVQAKQ. Residue Lys-331 forms a Glycyl lysine isopeptide (Lys-Gly) (interchain with G-Cter in SUMO2) linkage. 2 disordered regions span residues 399–423 and 739–787; these read DSDV…RADP and SPSY…RRRG. Over residues 759–772 the composition is skewed to low complexity; it reads STSSDTSTPTSSGS. Residues 781 to 813 form a required for activation of KAT8 histone acetyltransferase activity region; it reads PVRRRRGESSFDINNIVIPMSVAATTRVEKLQY. One can recognise a PEHE domain in the interval 815-966; that stretch reads EILTPSWREV…GLDEQSVQPW (152 aa). The tract at residues 841 to 859 is interaction with KAT8 HAT domain; sequence EDLSDAAFAALHAKCEEME. Residues 869 to 931 are disordered; it reads VPPQRRGSRS…SPISPELHSA (63 aa). Residues 886–896 show a composition bias toward polar residues; the sequence is TTPQLGSANPS. The segment covering 906–919 has biased composition (low complexity); that stretch reads SSSHSLSEFSHGQS. A phosphoserine mark is found at Ser-922 and Ser-925. Thr-934 is subject to Phosphothreonine. Ser-976 bears the Phosphoserine mark. The tract at residues 989 to 1020 is disordered; the sequence is DTAARCTRRTSGSKTGREAEVAPTSPPVVPLK.

In terms of assembly, component of the NSL complex at least composed of MOF/KAT8, KANSL1, KANSL2, KANSL3, MCRS1, PHF20, OGT1/OGT, WDR5 and HCFC1. Interacts (via PEHE domain) with KAT8 (via HAT domain); the interaction is direct. Component of some MLL1/MLL complex, at least composed of the core components KMT2A/MLL1, ASH2L, HCFC1, WDR5 and RBBP5, as well as the facultative components BACC1, CHD8, E2F6, HSP70, INO80C, KANSL1, LAS1L, MAX, MCRS1, MGA, KAT8/MOF, PELP1, PHF20, PRP31, RING2, RUVB1/TIP49A, RUVB2/TIP49B, SENP3, TAF1, TAF4, TAF6, TAF7, TAF9 and TEX10.

It localises to the nucleus. Its subcellular location is the chromosome. It is found in the centromere. The protein resides in the kinetochore. The protein localises to the mitochondrion. It localises to the cytoplasm. Its subcellular location is the cytoskeleton. It is found in the spindle pole. In terms of biological role, non-catalytic component of the NSL histone acetyltransferase complex, a multiprotein complex that mediates histone H4 acetylation at 'Lys-5'- and 'Lys-8' (H4K5ac and H4K8ac) at transcription start sites and promotes transcription initiation. The NSL complex also acts as a regulator of gene expression in mitochondria. In addition to its role in transcription, KANSL1 also plays an essential role in spindle assembly during mitosis. Associates with microtubule ends and contributes to microtubule stability. The chain is KAT8 regulatory NSL complex subunit 1 (Kansl1) from Mus musculus (Mouse).